Here is a 408-residue protein sequence, read N- to C-terminus: Phosphoglycerate kinase (408 aa).

Substrate is bound by residues 24 to 26 (DLN), R39, 62 to 65 (HLGR), R121, and R161. Residues K211, G307, E338, and 364–367 (GGDS) contribute to the ATP site.

Belongs to the phosphoglycerate kinase family. Monomer.

Its subcellular location is the cytoplasm. The enzyme catalyses (2R)-3-phosphoglycerate + ATP = (2R)-3-phospho-glyceroyl phosphate + ADP. The protein operates within carbohydrate degradation; glycolysis; pyruvate from D-glyceraldehyde 3-phosphate: step 2/5. This is Phosphoglycerate kinase from Paenarthrobacter aurescens (strain TC1).